Consider the following 429-residue polypeptide: MKNLIIRHARQVVLVCKNGERILKGEALKNIAILEGSVNRGISVVADEFGKIECIGYDDDVEPQYNQCSFASEIDATGMCVLPGLIDGHTHPVWVGDRVHEFAMKLAGASYMDVHKAGGGINFTVEHVHKATEDELYEPLKQRLNRMLQCGTTLVEAKSGYGLNTENEMKMLKVIERAKKELPIEISSTFCGAHAIPRGSTAKQAADNIINEQIPTLVKAIKAGELDVENIDVFCEKGVFEVEETRVILQAGKDAGLAINFHGDELHPIKGAELGAELGARAISHLEEISEEGIKAMSKSSVIGVLLPTTAYILRLKPPPARAMIDAGVAIALGTDFNPNAYCLSMPLTMHLACCILRMSMTEALAGATINAAASLGRADTHGSLEVGKFADMVVINAERWEHLIYQIGGHDDIIQHVVKHGKVVFSKR.

Tyr-161 and His-194 together coordinate 4-imidazolone-5-propanoate. Position 161 (Tyr-161) interacts with N-formimidoyl-L-glutamate. Residue His-262 participates in Fe(3+) binding. Position 262 (His-262) interacts with Zn(2+). Glu-265 provides a ligand contact to 4-imidazolone-5-propanoate. Asp-336 provides a ligand contact to Fe(3+). Asp-336 contacts Zn(2+). An N-formimidoyl-L-glutamate-binding site is contributed by Asn-338.

Belongs to the metallo-dependent hydrolases superfamily. HutI family. Zn(2+) is required as a cofactor. The cofactor is Fe(3+).

It catalyses the reaction 4-imidazolone-5-propanoate + H2O = N-formimidoyl-L-glutamate. It functions in the pathway amino-acid degradation; L-histidine degradation into L-glutamate; N-formimidoyl-L-glutamate from L-histidine: step 3/3. In Nematostella vectensis (Starlet sea anemone), this protein is Probable imidazolonepropionase (amdhd1).